Reading from the N-terminus, the 248-residue chain is Probable transcriptional regulatory protein Acid345_2125 (248 aa).

The protein belongs to the TACO1 family.

The protein localises to the cytoplasm. In Koribacter versatilis (strain Ellin345), this protein is Probable transcriptional regulatory protein Acid345_2125.